We begin with the raw amino-acid sequence, 335 residues long: Sphingomyelinase C (335 aa).

The N-terminal stretch at 1–28 is a signal peptide; that stretch reads MEKFKIIKTIPKICGAFIFLLFFTFLFG.

The protein belongs to the neutral sphingomyelinase family.

Its subcellular location is the secreted. It catalyses the reaction a sphingomyelin + H2O = phosphocholine + an N-acylsphing-4-enine + H(+). In terms of biological role, virulence factor that promotes intracellular proliferation by mediating the disruption of the phagocytic vacuole and the release of bacteria into the host cell cytosol. May act in concert with the phospholipases PlcA and PlcB and the hemolysin hly to mediate efficient escape from the vacuole. This Listeria ivanovii protein is Sphingomyelinase C (smcL).